We begin with the raw amino-acid sequence, 372 residues long: UDP-N-acetylglucosamine--N-acetylmuramyl-(pentapeptide) pyrophosphoryl-undecaprenol N-acetylglucosamine transferase (372 aa).

UDP-N-acetyl-alpha-D-glucosamine is bound by residues Thr11 to Gly13, Asn123, Arg160, Ser200, and Gln298.

This sequence belongs to the glycosyltransferase 28 family. MurG subfamily.

Its subcellular location is the cell membrane. The catalysed reaction is di-trans,octa-cis-undecaprenyl diphospho-N-acetyl-alpha-D-muramoyl-L-alanyl-D-glutamyl-meso-2,6-diaminopimeloyl-D-alanyl-D-alanine + UDP-N-acetyl-alpha-D-glucosamine = di-trans,octa-cis-undecaprenyl diphospho-[N-acetyl-alpha-D-glucosaminyl-(1-&gt;4)]-N-acetyl-alpha-D-muramoyl-L-alanyl-D-glutamyl-meso-2,6-diaminopimeloyl-D-alanyl-D-alanine + UDP + H(+). It functions in the pathway cell wall biogenesis; peptidoglycan biosynthesis. Its function is as follows. Cell wall formation. Catalyzes the transfer of a GlcNAc subunit on undecaprenyl-pyrophosphoryl-MurNAc-pentapeptide (lipid intermediate I) to form undecaprenyl-pyrophosphoryl-MurNAc-(pentapeptide)GlcNAc (lipid intermediate II). This chain is UDP-N-acetylglucosamine--N-acetylmuramyl-(pentapeptide) pyrophosphoryl-undecaprenol N-acetylglucosamine transferase, found in Cutibacterium acnes (strain DSM 16379 / KPA171202) (Propionibacterium acnes).